Consider the following 382-residue polypeptide: Probable protein phosphatase 2C 65 (382 aa).

The PPM-type phosphatase domain occupies 47–337; that stretch reads HVSMSIKQGK…DDCAVVVLYL (291 aa). Mn(2+)-binding residues include D83 and G84. Positions 107–126 are disordered; that stretch reads KIRSSKSAGDENIENNSSQS. 2 residues coordinate Mn(2+): D282 and D328.

The protein belongs to the PP2C family. Requires Mg(2+) as cofactor. The cofactor is Mn(2+).

It carries out the reaction O-phospho-L-seryl-[protein] + H2O = L-seryl-[protein] + phosphate. The catalysed reaction is O-phospho-L-threonyl-[protein] + H2O = L-threonyl-[protein] + phosphate. The polypeptide is Probable protein phosphatase 2C 65 (Arabidopsis thaliana (Mouse-ear cress)).